The primary structure comprises 562 residues: Formate--tetrahydrofolate ligase (562 aa).

71–78 (TPAGEGKS) lines the ATP pocket.

This sequence belongs to the formate--tetrahydrofolate ligase family.

It carries out the reaction (6S)-5,6,7,8-tetrahydrofolate + formate + ATP = (6R)-10-formyltetrahydrofolate + ADP + phosphate. It participates in one-carbon metabolism; tetrahydrofolate interconversion. This Bacillus cereus (strain ATCC 10987 / NRS 248) protein is Formate--tetrahydrofolate ligase.